The primary structure comprises 5085 residues: Linear gramicidin synthase subunit D (5085 aa).

4 consecutive Carrier domains span residues 962–1037 (APRT…AAAG), 2023–2097 (SPST…EEKA), 3544–3619 (APRN…ELLT), and 4601–4676 (APQT…EEII). Ser-997, Ser-2058, Ser-3579, and Ser-4636 each carry O-(pantetheine 4'-phosphoryl)serine.

This sequence belongs to the ATP-dependent AMP-binding enzyme family. In terms of assembly, large multienzyme complex composed of 4 subunits; LgrA, LgrB, LgrC and LgrD. Pantetheine 4'-phosphate serves as cofactor.

Activates the 13th to the 16th (Trp, D-Leu, Trp and Gly) amino acids in linear gramicidin and catalyzes the formation of the peptide bond between them. This enzyme is also responsible for the epimerization of the 14th (D-Leu) amino acid. It also catalyzes the NAD(P)H-dependent reduction of the C-terminal glycine residue of the N-formylated 16-mer peptide, that binds to the peptidyl carrier domain of the terminal module of this protein, to form a peptidyl-aldehyde intermediate that is released from the enzyme complex. The chain is Linear gramicidin synthase subunit D (lgrD) from Brevibacillus parabrevis.